A 259-amino-acid polypeptide reads, in one-letter code: Deoxyribose-phosphate aldolase (259 aa).

The active-site Proton donor/acceptor is aspartate 102. The active-site Schiff-base intermediate with acetaldehyde is the lysine 167. Lysine 201 (proton donor/acceptor) is an active-site residue.

Belongs to the DeoC/FbaB aldolase family. DeoC type 2 subfamily.

The protein resides in the cytoplasm. The enzyme catalyses 2-deoxy-D-ribose 5-phosphate = D-glyceraldehyde 3-phosphate + acetaldehyde. The protein operates within carbohydrate degradation; 2-deoxy-D-ribose 1-phosphate degradation; D-glyceraldehyde 3-phosphate and acetaldehyde from 2-deoxy-alpha-D-ribose 1-phosphate: step 2/2. In terms of biological role, catalyzes a reversible aldol reaction between acetaldehyde and D-glyceraldehyde 3-phosphate to generate 2-deoxy-D-ribose 5-phosphate. The polypeptide is Deoxyribose-phosphate aldolase (Enterobacter sp. (strain 638)).